The primary structure comprises 578 residues: Proteasome-associated ATPase (578 aa).

The stretch at 35-84 forms a coiled coil; that stretch reads RHLTALEEQLGAARTRLAQVSAQNDRLATTLREARDQIVALKAEVDRLGQ. 266–271 provides a ligand contact to ATP; sequence GCGKTL. The tract at residues 577 to 578 is docks into pockets in the proteasome alpha-ring; sequence YL.

It belongs to the AAA ATPase family. Homohexamer. Assembles into a hexameric ring structure that caps the 20S proteasome core. Strongly interacts with the prokaryotic ubiquitin-like protein Pup through a hydrophobic interface; the interacting region of ARC lies in its N-terminal coiled-coil domain. There is one Pup binding site per ARC hexamer ring. Upon ATP-binding, the C-terminus of ARC interacts with the alpha-rings of the proteasome core, possibly by binding to the intersubunit pockets.

The protein operates within protein degradation; proteasomal Pup-dependent pathway. In terms of biological role, ATPase which is responsible for recognizing, binding, unfolding and translocation of pupylated proteins into the bacterial 20S proteasome core particle. May be essential for opening the gate of the 20S proteasome via an interaction with its C-terminus, thereby allowing substrate entry and access to the site of proteolysis. Thus, the C-termini of the proteasomal ATPase may function like a 'key in a lock' to induce gate opening and therefore regulate proteolysis. The sequence is that of Proteasome-associated ATPase from Kineococcus radiotolerans (strain ATCC BAA-149 / DSM 14245 / SRS30216).